The following is a 365-amino-acid chain: Anhydro-N-acetylmuramic acid kinase (365 aa).

9–16 (GTSLDGVD) is an ATP binding site.

It belongs to the anhydro-N-acetylmuramic acid kinase family.

It catalyses the reaction 1,6-anhydro-N-acetyl-beta-muramate + ATP + H2O = N-acetyl-D-muramate 6-phosphate + ADP + H(+). The protein operates within amino-sugar metabolism; 1,6-anhydro-N-acetylmuramate degradation. Its pathway is cell wall biogenesis; peptidoglycan recycling. Its function is as follows. Catalyzes the specific phosphorylation of 1,6-anhydro-N-acetylmuramic acid (anhMurNAc) with the simultaneous cleavage of the 1,6-anhydro ring, generating MurNAc-6-P. Is required for the utilization of anhMurNAc either imported from the medium or derived from its own cell wall murein, and thus plays a role in cell wall recycling. This is Anhydro-N-acetylmuramic acid kinase from Zymomonas mobilis subsp. mobilis (strain ATCC 31821 / ZM4 / CP4).